The following is a 1052-amino-acid chain: Mitotic checkpoint serine/threonine-protein kinase BUB1 beta (1052 aa).

One can recognise a BUB1 N-terminal domain in the interval 56–219 (FESEIRFYSG…LEPSEPQRSS (164 aa)). Positions 105 to 112 (GETRYYND) match the Nuclear localization signal motif. The necessary for interaction with KNL1 stretch occupies residues 146 to 179 (AQFYISWAEEYEARENFKKADIIFQEGIERKAEP). Disordered stretches follow at residues 206-256 (EEEA…NAVP) and 272-327 (ADTA…TSIP). Positions 217–225 (RSSLAELKS) match the D-box motif. Lysine 243 carries the N6-acetyllysine; by PCAF modification. At serine 360 the chain carries Phosphoserine. Positions 361-381 (TRKPGREEGDPLQRVQSHQQG) are disordered. A Phosphoserine modification is found at serine 428. A disordered region spans residues 496–552 (SNPREISPAENILQEQPDSKGSSMPFSIFDESLSDKKDKSPATGGPQVLNAQRRPLS). A compositionally biased stretch (polar residues) spans 508 to 520 (LQEQPDSKGSSMP). A phosphoserine mark is found at serine 535 and serine 659. A Phosphoserine; by PLK1 modification is found at serine 665. Serine 686 carries the post-translational modification Phosphoserine. One can recognise a Protein kinase domain in the interval 756–1040 (VIKQEHLTCD…TISPEALLTQ (285 aa)). 762–770 (LTCDDYRLF) contacts ATP. Threonine 781 carries the phosphothreonine; by PLK1 modification. Lysine 784 is a binding site for ATP. Aspartate 871 serves as the catalytic Proton acceptor. Residue threonine 998 is modified to Phosphothreonine; by PLK1. A phosphoserine mark is found at serine 1033 and serine 1050.

This sequence belongs to the protein kinase superfamily. Ser/Thr protein kinase family. BUB1 subfamily. Interacts with CENPE. Interacts with PLK1. Part of a complex containing BUB3, CDC20 and BUB1B. Interacts with anaphase-promoting complex/cyclosome (APC/C). Interacts with KNL1. Interacts with KAT2B. Interacts with RIPK3. Interacts with the closed conformation form of MAD2L1. Interacts with CDC20. Proteolytically cleaved by caspase-3 in a cell cycle specific manner. The cleavage might be involved in the durability of the cell cycle delay. In terms of processing, acetylation at Lys-243 regulates its degradation and timing in anaphase entry. Post-translationally, ubiquitinated. Degraded by the proteasome. Ubiquitinated by UBR5, promoting disassembly of the mitotic checkpoint complex from the APC/C complex. Sumoylated with SUMO2 and SUMO3. The sumoylation mediates the association with CENPE at the kinetochore. In terms of processing, autophosphorylated in vitro. Intramolecular autophosphorylation stimulated by CENPE. Phosphorylated during mitosis and hyperphosphorylated in mitotically arrested cells. Phosphorylation at Ser-659 and Ser-1033 occurs at kinetochores upon mitotic entry with dephosphorylation at the onset of anaphase. Post-translationally, proteolytically cleaved by caspase-3 in a cell cycle specific manner. The cleavage might be involved in the durability of the cell cycle delay. Caspase-3 cleavage is associated with abrogation of the mitotic checkpoint. The major site of cleavage is at Asp-603. As to expression, highly expressed in thymus followed by spleen.

It is found in the cytoplasm. Its subcellular location is the nucleus. It localises to the chromosome. The protein resides in the centromere. The protein localises to the kinetochore. The catalysed reaction is L-seryl-[protein] + ATP = O-phospho-L-seryl-[protein] + ADP + H(+). The enzyme catalyses L-threonyl-[protein] + ATP = O-phospho-L-threonyl-[protein] + ADP + H(+). Its activity is regulated as follows. Kinase activity stimulated by CENPE. Essential component of the mitotic checkpoint. Required for normal mitosis progression and tumor suppression. The mitotic checkpoint delays anaphase until all chromosomes are properly attached to the mitotic spindle. One of its checkpoint functions is to inhibit the activity of the anaphase-promoting complex/cyclosome (APC/C) by blocking the binding of CDC20 to APC/C, independently of its kinase activity. The other is to monitor kinetochore activities that depend on the kinetochore motor CENPE. Required for kinetochore localization of CENPE. Negatively regulates PLK1 activity in interphase cells and suppresses centrosome amplification. Also implicated in triggering apoptosis in polyploid cells that exit aberrantly from mitotic arrest. Essential for tumor suppression. May play a role in regulating aging and fertility. The polypeptide is Mitotic checkpoint serine/threonine-protein kinase BUB1 beta (Bub1b) (Mus musculus (Mouse)).